The primary structure comprises 260 residues: Aspartate/glutamate leucyltransferase (260 aa).

It belongs to the R-transferase family. Bpt subfamily.

Its subcellular location is the cytoplasm. It carries out the reaction N-terminal L-glutamyl-[protein] + L-leucyl-tRNA(Leu) = N-terminal L-leucyl-L-glutamyl-[protein] + tRNA(Leu) + H(+). The enzyme catalyses N-terminal L-aspartyl-[protein] + L-leucyl-tRNA(Leu) = N-terminal L-leucyl-L-aspartyl-[protein] + tRNA(Leu) + H(+). Functions in the N-end rule pathway of protein degradation where it conjugates Leu from its aminoacyl-tRNA to the N-termini of proteins containing an N-terminal aspartate or glutamate. The polypeptide is Aspartate/glutamate leucyltransferase (Sphingomonas elodea).